A 264-amino-acid chain; its full sequence is Thymidylate synthase (264 aa).

R21 is a dUMP binding site. H51 serves as a coordination point for (6R)-5,10-methylene-5,6,7,8-tetrahydrofolate. A dUMP-binding site is contributed by 126–127 (RR). C146 serves as the catalytic Nucleophile. Residues 166 to 169 (RSCD), N177, and 207 to 209 (HLY) contribute to the dUMP site. D169 lines the (6R)-5,10-methylene-5,6,7,8-tetrahydrofolate pocket. A263 lines the (6R)-5,10-methylene-5,6,7,8-tetrahydrofolate pocket.

Belongs to the thymidylate synthase family. Bacterial-type ThyA subfamily. Homodimer.

The protein localises to the cytoplasm. The catalysed reaction is dUMP + (6R)-5,10-methylene-5,6,7,8-tetrahydrofolate = 7,8-dihydrofolate + dTMP. It participates in pyrimidine metabolism; dTTP biosynthesis. Catalyzes the reductive methylation of 2'-deoxyuridine-5'-monophosphate (dUMP) to 2'-deoxythymidine-5'-monophosphate (dTMP) while utilizing 5,10-methylenetetrahydrofolate (mTHF) as the methyl donor and reductant in the reaction, yielding dihydrofolate (DHF) as a by-product. This enzymatic reaction provides an intracellular de novo source of dTMP, an essential precursor for DNA biosynthesis. The chain is Thymidylate synthase from Citrobacter koseri (strain ATCC BAA-895 / CDC 4225-83 / SGSC4696).